The following is a 78-amino-acid chain: MRLILWLPVLVVVLLMVLEGPAPAQGAPDIAGTFRNIPNSLKEFGNNLKDAFESIPEATRKLMTSFAEGLKNFRIPMV.

The N-terminal stretch at 1 to 26 is a signal peptide; sequence MRLILWLPVLVVVLLMVLEGPAPAQG.

It belongs to the apolipoprotein C1 family.

The protein localises to the secreted. Inhibitor of lipoprotein binding to the low density lipoprotein (LDL) receptor, LDL receptor-related protein, and very low density lipoprotein (VLDL) receptor. Associates with high density lipoproteins (HDL) and the triacylglycerol-rich lipoproteins in the plasma and makes up about 10% of the protein of the VLDL and 2% of that of HDL. Appears to interfere directly with fatty acid uptake and is also the major plasma inhibitor of cholesteryl ester transfer protein (CETP). Binds free fatty acids and reduces their intracellular esterification. Modulates the interaction of APOE with beta-migrating VLDL and inhibits binding of beta-VLDL to the LDL receptor-related protein. This Puma concolor (Mountain lion) protein is Apolipoprotein C-I (APOC1).